Reading from the N-terminus, the 196-residue chain is Holliday junction branch migration complex subunit RuvA (196 aa).

The domain I stretch occupies residues 1 to 63 (MINKIYGKIV…DDDVKLFGFL (63 aa)). The domain II stretch occupies residues 64–142 (NISEREVFED…KGDESSSYML (79 aa)). A region of interest (flexible linker) is located at residue lysine 143. The domain III stretch occupies residues 143–196 (KFKELEQSIVNMGFDRKLVVVAFREIMLSDKFLILKEAEQEQFLFTETLKRLSV).

The protein belongs to the RuvA family. As to quaternary structure, homotetramer. Forms an RuvA(8)-RuvB(12)-Holliday junction (HJ) complex. HJ DNA is sandwiched between 2 RuvA tetramers; dsDNA enters through RuvA and exits via RuvB. An RuvB hexamer assembles on each DNA strand where it exits the tetramer. Each RuvB hexamer is contacted by two RuvA subunits (via domain III) on 2 adjacent RuvB subunits; this complex drives branch migration. In the full resolvosome a probable DNA-RuvA(4)-RuvB(12)-RuvC(2) complex forms which resolves the HJ.

Its subcellular location is the cytoplasm. Functionally, the RuvA-RuvB-RuvC complex processes Holliday junction (HJ) DNA during genetic recombination and DNA repair, while the RuvA-RuvB complex plays an important role in the rescue of blocked DNA replication forks via replication fork reversal (RFR). RuvA specifically binds to HJ cruciform DNA, conferring on it an open structure. The RuvB hexamer acts as an ATP-dependent pump, pulling dsDNA into and through the RuvAB complex. HJ branch migration allows RuvC to scan DNA until it finds its consensus sequence, where it cleaves and resolves the cruciform DNA. The chain is Holliday junction branch migration complex subunit RuvA from Borrelia duttonii (strain Ly).